Here is a 137-residue protein sequence, read N- to C-terminus: Small ribosomal subunit protein uS9 (137 aa).

The segment at 104–137 (PLKSEGYLTRDPRAKERKKYGLHKARKAPQYSKR) is disordered. Over residues 118–137 (KERKKYGLHKARKAPQYSKR) the composition is skewed to basic residues.

This sequence belongs to the universal ribosomal protein uS9 family.

The polypeptide is Small ribosomal subunit protein uS9 (Gloeothece citriformis (strain PCC 7424) (Cyanothece sp. (strain PCC 7424))).